We begin with the raw amino-acid sequence, 322 residues long: Glycerol-3-phosphate dehydrogenase [NAD(P)+] (322 aa).

Residues Trp13, His33, and Lys99 each coordinate NADPH. Residues Lys99, Gly127, and Ser129 each contribute to the sn-glycerol 3-phosphate site. Residue Ala131 participates in NADPH binding. 5 residues coordinate sn-glycerol 3-phosphate: Lys182, Asp235, Ser245, Arg246, and Asn247. Lys182 functions as the Proton acceptor in the catalytic mechanism. Residue Arg246 participates in NADPH binding. Glu272 contributes to the NADPH binding site.

It belongs to the NAD-dependent glycerol-3-phosphate dehydrogenase family.

The protein resides in the cytoplasm. It carries out the reaction sn-glycerol 3-phosphate + NAD(+) = dihydroxyacetone phosphate + NADH + H(+). It catalyses the reaction sn-glycerol 3-phosphate + NADP(+) = dihydroxyacetone phosphate + NADPH + H(+). The protein operates within membrane lipid metabolism; glycerophospholipid metabolism. Its function is as follows. Catalyzes the reduction of the glycolytic intermediate dihydroxyacetone phosphate (DHAP) to sn-glycerol 3-phosphate (G3P), the key precursor for phospholipid synthesis. The sequence is that of Glycerol-3-phosphate dehydrogenase [NAD(P)+] from Ruthia magnifica subsp. Calyptogena magnifica.